A 436-amino-acid polypeptide reads, in one-letter code: 3-ketoacyl-CoA thiolase (436 aa).

Cys-99 acts as the Acyl-thioester intermediate in catalysis. Active-site proton acceptor residues include His-392 and Cys-422.

It belongs to the thiolase-like superfamily. Thiolase family. Heterotetramer of two alpha chains (FadJ) and two beta chains (FadI).

Its subcellular location is the cytoplasm. The catalysed reaction is an acyl-CoA + acetyl-CoA = a 3-oxoacyl-CoA + CoA. It participates in lipid metabolism; fatty acid beta-oxidation. In terms of biological role, catalyzes the final step of fatty acid oxidation in which acetyl-CoA is released and the CoA ester of a fatty acid two carbons shorter is formed. The sequence is that of 3-ketoacyl-CoA thiolase from Escherichia coli O1:K1 / APEC.